We begin with the raw amino-acid sequence, 244 residues long: tRNA (guanine-N(1)-)-methyltransferase (244 aa).

S-adenosyl-L-methionine-binding positions include Gly112 and 132-137 (IGDYIL).

This sequence belongs to the RNA methyltransferase TrmD family. In terms of assembly, homodimer.

It is found in the cytoplasm. It carries out the reaction guanosine(37) in tRNA + S-adenosyl-L-methionine = N(1)-methylguanosine(37) in tRNA + S-adenosyl-L-homocysteine + H(+). Specifically methylates guanosine-37 in various tRNAs. In Geobacillus kaustophilus (strain HTA426), this protein is tRNA (guanine-N(1)-)-methyltransferase.